We begin with the raw amino-acid sequence, 167 residues long: Large ribosomal subunit protein bL9 (167 aa).

This sequence belongs to the bacterial ribosomal protein bL9 family.

Its function is as follows. Binds to the 23S rRNA. This Nitratidesulfovibrio vulgaris (strain ATCC 29579 / DSM 644 / CCUG 34227 / NCIMB 8303 / VKM B-1760 / Hildenborough) (Desulfovibrio vulgaris) protein is Large ribosomal subunit protein bL9.